The following is a 258-amino-acid chain: Hydroxypyruvate isomerase (258 aa).

Active-site proton donor/acceptor residues include glutamate 143 and glutamate 240.

It belongs to the hyi family. In terms of assembly, homodimer.

It carries out the reaction 3-hydroxypyruvate = 2-hydroxy-3-oxopropanoate. Not stimulated by addition of pyridoxal 5'-phosphate (0.1 mM), FAD, NAD(+), NADP(+) or ATP (1 mM each). EDTA (10 mM) and metal ions (1 mM) such as Ca(2+), Co(2+), Mg(2+), Ni(2+), Zn(2+) do not affect the enzyme activity. In terms of biological role, catalyzes the reversible isomerization between hydroxypyruvate and 2-hydroxy-3-oxopropanoate (also termed tartronate semialdehyde). Does not catalyze the isomerization of D-fructose to D-glucose or that of D-xylulose to D-xylose. Also does not catalyze racemization of serine, alanine, glycerate or lactate. The chain is Hydroxypyruvate isomerase (hyi) from Escherichia coli (strain K12).